Here is a 542-residue protein sequence, read N- to C-terminus: Membrane protein insertase YidC (542 aa).

6 helical membrane passes run 6 to 26 (NILL…WQTD), 326 to 346 (LVVD…LLMF), 350 to 370 (FVGN…GGLY), 421 to 441 (GGCL…WVLL), 458 to 478 (LSVQ…MFLM), and 501 to 521 (VIFT…WLVG).

This sequence belongs to the OXA1/ALB3/YidC family. Type 1 subfamily. In terms of assembly, interacts with the Sec translocase complex via SecD. Specifically interacts with transmembrane segments of nascent integral membrane proteins during membrane integration.

The protein localises to the cell inner membrane. Its function is as follows. Required for the insertion and/or proper folding and/or complex formation of integral membrane proteins into the membrane. Involved in integration of membrane proteins that insert both dependently and independently of the Sec translocase complex, as well as at least some lipoproteins. Aids folding of multispanning membrane proteins. The chain is Membrane protein insertase YidC from Shewanella frigidimarina (strain NCIMB 400).